The chain runs to 478 residues: Putative indole-3-acetic acid-amido synthetase GH3.10 (478 aa).

Belongs to the IAA-amido conjugating enzyme family.

Its function is as follows. May catalyze the synthesis of indole-3-acetic acid (IAA)-amino acid conjugates, providing a mechanism for the plant to cope with the presence of excess auxin. The sequence is that of Putative indole-3-acetic acid-amido synthetase GH3.10 (GH3.10) from Oryza sativa subsp. japonica (Rice).